The sequence spans 196 residues: uncharacterized protein (196 aa).

It belongs to the CDP-alcohol phosphatidyltransferase class-I family.

This is an uncharacterized protein from Aquifex aeolicus (strain VF5).